The sequence spans 761 residues: Ribonucleoside-diphosphate reductase 1 subunit alpha (761 aa).

Residues 5-95 form the ATP-cone domain; sequence LLVTKRDGST…IFHLRKKAYG (91 aa). ATP is bound by residues Lys9, 15 to 21, Thr55, and Lys91; that span reads ERINLDK. GDP is bound at residue Thr209. A disulfide bond links Cys225 and Cys462. Residues 232–234, Arg262, and Arg269 contribute to the dTTP site; that span reads DSL. At Lys283 the chain carries N6-acetyllysine. Asn437 serves as a coordination point for GDP. Asn437 functions as the Proton acceptor in the catalytic mechanism. The active-site Cysteine radical intermediate is the Cys439. GDP is bound by residues Glu441 and 623–625; that span reads ETS. The Proton acceptor role is filled by Glu441.

This sequence belongs to the ribonucleoside diphosphate reductase large chain family. As to quaternary structure, tetramer of two alpha (R1) and two beta (R2) subunits. The B1 protein is a dimer of alpha subunits. A radical transfer pathway occurs between 'Tyr-122' of R2 and R1. Binding of the substrate occurs primarily when the active-site cysteines are reduced.

It carries out the reaction a 2'-deoxyribonucleoside 5'-diphosphate + [thioredoxin]-disulfide + H2O = a ribonucleoside 5'-diphosphate + [thioredoxin]-dithiol. Under complex allosteric control mediated by deoxynucleoside triphosphates and ATP binding to separate specificity and activation sites on the alpha subunit. The type of nucleotide bound at the specificity site determines substrate preference. It seems probable that ATP makes the enzyme reduce CDP and UDP, dGTP favors ADP reduction and dTTP favors GDP reduction. Stimulated by ATP and inhibited by dATP binding to the activity site. In vitro, its activity is increased by dithiothreitol (DTT) or thioredoxins (non-specific). Inhibited by hydroxyurea, leads to dNTP depletion, replication fork arrest and genomic instability. Its function is as follows. Provides the precursors necessary for DNA synthesis. Catalyzes the biosynthesis of deoxyribonucleotides from the corresponding ribonucleotides. R1 contains the binding sites for both substrates and allosteric effectors and carries out the actual reduction of the ribonucleotide. It also provides redox-active cysteines. The protein is Ribonucleoside-diphosphate reductase 1 subunit alpha (nrdA) of Escherichia coli (strain K12).